The primary structure comprises 1201 residues: Potassium/sodium hyperpolarization-activated cyclic nucleotide-gated channel 4 (1201 aa).

Over 1–263 (MDKLPPSMRK…IIHPYSDFRF (263 aa)) the chain is Cytoplasmic. Residues 24–183 (WIMDEEEDGE…PASASCEQPS (160 aa)) form a disordered region. Acidic residues predominate over residues 26 to 36 (MDEEEDGEEEG). Residues 105–118 (SRGGGSGGAGGGSS) show a composition bias toward gly residues. Over residues 121 to 132 (HLHDSAEERRLI) the composition is skewed to basic and acidic residues. Serine 139 is modified (phosphoserine). The span at 164-174 (ASPPPQQPPQP) shows a compositional bias: pro residues. The tract at residues 209–260 (GQSGFMQRQFGAMLQPGVNKFSLRMFGSQKAVEREQERVKSAGFWIIHPYSD) is involved in subunit assembly. The helical transmembrane segment at 264–286 (YWDLTMLLLMVGNLIIIPVGITF) threads the bilayer. Topologically, residues 287–293 (FKDENTT) are extracellular. A helical membrane pass occupies residues 294-314 (PWIVFNVVSDTFFLIDLVLNF). Topologically, residues 315–336 (RTGIVVEDNTEIILDPQRIKMK) are cytoplasmic. A helical transmembrane segment spans residues 337–359 (YLKSWFVVDFISSIPVDYIFLIV). The Extracellular portion of the chain corresponds to 360–378 (ETRIDSEVYKTARALRIVR). A helical; Voltage-sensor membrane pass occupies residues 379–399 (FTKILSLLRLLRLSRLIRYIH). Residues 400-413 (QWEEIFHMTYDLAS) lie on the Cytoplasmic side of the membrane. Residues 414 to 436 (AVVRIVNLIGMMLLLCHWDGCLQ) form a helical membrane-spanning segment. At 437 to 464 (FLVPMLQDFPHDCWVSINGMVNNSWGKQ) the chain is on the extracellular side. Residue asparagine 458 is glycosylated (N-linked (GlcNAc...) asparagine). Positions 465-486 (YSYALFKAMSHMLCIGYGRQAP) form an intramembrane region, pore-forming. The Extracellular segment spans residues 487–491 (VGMSD). Residues 492–517 (VWLTMLSMIVGATCYAMFIGHATALI) traverse the membrane as a helical segment. Over 518–1201 (QSLDSSRRQY…PVRSKLPSNL (684 aa)) the chain is Cytoplasmic. Residues tyrosine 559, lysine 562, phenylalanine 564, and glutamate 566 each contribute to the 3',5'-cyclic GMP site. 3',5'-cyclic AMP-binding residues include glycine 659, glutamate 660, cysteine 662, arginine 669, threonine 670, valine 673, and arginine 710. 2 disordered regions span residues 804 to 902 (AIFR…TAAA) and 914 to 1201 (ALGG…PSNL). Composition is skewed to low complexity over residues 831–856 (SLIPSALGSASPASSPSQVDTPSSSS) and 866–880 (SAPPGLSPLLPSSSS). Positions 881–894 (SPPPGACGSPPAPT) are enriched in pro residues. Low complexity-rich tracts occupy residues 915-939 (LGGSLSSSDSPLLTPLQPGARSPQA) and 967-995 (RSPSSSPGQLGQPPGELSLGLAAGPSSTP). Residues 1029–1042 (GHSPGPPRTFPSAP) show a composition bias toward pro residues. Low complexity predominate over residues 1045 to 1056 (ASGSHGSLLLPP). 2 positions are modified to phosphoserine: serine 1105 and serine 1108. Residues 1122 to 1134 (AGGGSGSSGGLGP) are compositionally biased toward gly residues.

Belongs to the potassium channel HCN family. As to quaternary structure, homotetramer. The potassium channel is composed of a homo- or heterotetrameric complex of pore-forming subunits. Interacts with PEX5L with a 4:4 HCN4:PEX5L stoichiometry; reduces the effects of cAMP on the voltage-dependence and rate of activation. Interacts with IRAG1; regulates HCN4 channel activity. Interacts with IRAG2; regulates HCN4 channel activity. S-palmitoylated. Detected in a subset of elongated cells in taste buds.

It is found in the cell membrane. It carries out the reaction K(+)(in) = K(+)(out). It catalyses the reaction Na(+)(in) = Na(+)(out). Its activity is regulated as follows. Activated by cAMP, and to a lesser extent by cGMP and cCMP. cAMP binding causes a conformation change that leads to the assembly of an active tetramer and channel opening. Binding of cAMP removes a tonic inhibition conferred by cyclic nucleotide-binding domain (CNBD) on channel opening. Cyclic dinucleotides can modulate HCN4 channel; cyclic dinucleotides acting as potent antagonists of cAMP. Inhibited by extracellular Cs(+) ions. Auxiliary subunits can also regulate HCN4 channel. IRAG1 causes a gain-of-function by shifting HCN4 activation to more depolarized membrane potentials in the absence of cAMP. In contrast, IRAG2 causes a loss-of-function by inhibiting cAMP-dependent potentiation of HCN4 activation. Hyperpolarization-activated ion channel that are permeable to Na(+) and K(+) ions with very slow activation and inactivation. Exhibits higher selectivity for K(+) over Na(+) ions. Contributes to the native pacemaker currents in heart (If) that regulate the rhythm of heart beat. Contributes to the native pacemaker currents in neurons (Ih). May mediate responses to sour stimuli. This is Potassium/sodium hyperpolarization-activated cyclic nucleotide-gated channel 4 (Hcn4) from Mus musculus (Mouse).